The primary structure comprises 354 residues: MSGNTIGNVFRVTTWGESHGGAIGAVIDGCPPGLGLSEQHIQAALDRRKPGVGAFATPRQETDRIEILSGVFEGRTTGTPIALLIRNRDANSGAYDGLRNIFRPGHGDYTYFKKYGLRDHRGGGRASGRETAARVAAGAVAALVTAAAGIDVLAYTIALGGVSISESGTTVNRESLANPLCCPDQEAARRMTGRLEEARNAGDSLGGIVGIVVRGCPAGLGEPVFDKMDAQLAGALMSIGTVKGVEIGAGFAVAGMKGSESNDPLSPGGFLANASGGILAGITNGEQINMRVACKPIPSISRSQKTVDREGNPVTLSIGGRHDVCVIPRIIPVCEAMVQIVLADFLLRQKAVTL.

Arg48 provides a ligand contact to NADP(+). FMN contacts are provided by residues 125 to 127, Ala280, 295 to 299, and Arg321; these read RAS and KPIPS.

Belongs to the chorismate synthase family. In terms of assembly, homotetramer. Requires FMNH2 as cofactor.

It catalyses the reaction 5-O-(1-carboxyvinyl)-3-phosphoshikimate = chorismate + phosphate. Its pathway is metabolic intermediate biosynthesis; chorismate biosynthesis; chorismate from D-erythrose 4-phosphate and phosphoenolpyruvate: step 7/7. In terms of biological role, catalyzes the anti-1,4-elimination of the C-3 phosphate and the C-6 proR hydrogen from 5-enolpyruvylshikimate-3-phosphate (EPSP) to yield chorismate, which is the branch point compound that serves as the starting substrate for the three terminal pathways of aromatic amino acid biosynthesis. This reaction introduces a second double bond into the aromatic ring system. In Syntrophus aciditrophicus (strain SB), this protein is Chorismate synthase.